The sequence spans 102 residues: UPF0213 protein Ent638_3592 (102 aa).

In terms of domain architecture, GIY-YIG spans 4–79; that stretch reads VCWFLYLVRT…KQLTKRQKER (76 aa).

This sequence belongs to the UPF0213 family.

This is UPF0213 protein Ent638_3592 from Enterobacter sp. (strain 638).